The chain runs to 253 residues: Phosphoadenosine 5'-phosphosulfate reductase (253 aa).

The Nucleophile; cysteine thiosulfonate intermediate role is filled by Cys-242.

It belongs to the PAPS reductase family. CysH subfamily.

The protein resides in the cytoplasm. The catalysed reaction is [thioredoxin]-disulfide + sulfite + adenosine 3',5'-bisphosphate + 2 H(+) = [thioredoxin]-dithiol + 3'-phosphoadenylyl sulfate. It participates in sulfur metabolism; hydrogen sulfide biosynthesis; sulfite from sulfate: step 3/3. Its function is as follows. Catalyzes the formation of sulfite from phosphoadenosine 5'-phosphosulfate (PAPS) using thioredoxin as an electron donor. In Vibrio cholerae serotype O1 (strain ATCC 39541 / Classical Ogawa 395 / O395), this protein is Phosphoadenosine 5'-phosphosulfate reductase.